The primary structure comprises 510 residues: Histidine ammonia-lyase (510 aa).

Positions 143–145 (ASG) form a cross-link, 5-imidazolinone (Ala-Gly). Serine 144 bears the 2,3-didehydroalanine (Ser) mark.

The protein belongs to the PAL/histidase family. In terms of processing, contains an active site 4-methylidene-imidazol-5-one (MIO), which is formed autocatalytically by cyclization and dehydration of residues Ala-Ser-Gly.

It localises to the cytoplasm. The enzyme catalyses L-histidine = trans-urocanate + NH4(+). It functions in the pathway amino-acid degradation; L-histidine degradation into L-glutamate; N-formimidoyl-L-glutamate from L-histidine: step 1/3. The sequence is that of Histidine ammonia-lyase from Aliivibrio fischeri (strain ATCC 700601 / ES114) (Vibrio fischeri).